The following is a 456-amino-acid chain: Phospholipase A1 member A (456 aa).

Residues 1–25 (MPPGPWESCFWVGGLILWLSVGSSG) form the signal peptide. N79 carries an N-linked (GlcNAc...) asparagine glycan. Residue S166 is the Nucleophile of the active site. The active-site Charge relay system is the D190. C245 and C258 are joined by a disulfide. H260 functions as the Charge relay system in the catalytic mechanism. 2 cysteine pairs are disulfide-bonded: C282/C293 and C296/C304. N-linked (GlcNAc...) asparagine glycosylation occurs at N365. An involved in the recognition of diacyl-phospholipids region spans residues 374–456 (IPKQQRYGKG…VSCDLKIACV (83 aa)).

Belongs to the AB hydrolase superfamily. Lipase family. In terms of tissue distribution, widely expressed. Expressed in placenta, prostate and liver. Weakly or not expressed in skin, leukocytes, platelets, colon, spleen, lung, muscle and kidney.

It is found in the secreted. The catalysed reaction is a 1,2-diacyl-sn-glycero-3-phospho-L-serine + H2O = a 2-acyl-sn-glycero-3-phospho-L-serine + a fatty acid + H(+). It carries out the reaction 1,2-di-(9Z)-octadecenoyl-sn-glycero-3-phospho-L-serine + H2O = 2-(9Z-octadecenoyl)-sn-glycero-3-phospho-L-serine + (9Z)-octadecenoate + H(+). It catalyses the reaction 1-hexadecanoyl-2-(5Z,8Z,11Z,14Z-eicosatetraenoyl)-sn-glycero-3-phospho-L-serine + H2O = 2-(5Z,8Z,11Z,14Z)-eicosatetraenoyl-sn-glycero-3-phospho-L-serine + hexadecanoate + H(+). The enzyme catalyses a 1-acyl-sn-glycero-3-phospho-L-serine + H2O = sn-glycero-3-phospho-L-serine + a fatty acid + H(+). The catalysed reaction is 1-(9Z-octadecenoyl)-sn-glycero-3-phospho-L-serine + H2O = sn-glycero-3-phospho-L-serine + (9Z)-octadecenoate + H(+). Its function is as follows. Hydrolyzes the ester bond of the acyl group attached at the sn-1 position of phosphatidylserines (phospholipase A1 activity) and 1-acyl-2-lysophosphatidylserines (lysophospholipase activity) in the pathway of phosphatidylserines acyl chain remodeling. Cleaves phosphatidylserines exposed on the outer leaflet of the plasma membrane of apoptotic cells producing 2-acyl-1-lysophosphatidylserines, which in turn enhance mast cell activation and histamine production. Has no activity toward other glycerophospholipids including phosphatidylcholines, phosphatidylethanolamines, phosphatidic acids or phosphatidylinositols, or glycerolipids such as triolein. In terms of biological role, hydrolyzes lyso-PS but not PS. The sequence is that of Phospholipase A1 member A from Homo sapiens (Human).